The following is a 363-amino-acid chain: dTDP-3-amino-3,6-dideoxy-alpha-D-galactopyranose transaminase (363 aa).

Lys185 carries the N6-(pyridoxal phosphate)lysine modification.

Belongs to the DegT/DnrJ/EryC1 family. Requires pyridoxal 5'-phosphate as cofactor.

It catalyses the reaction dTDP-3-amino-3,6-dideoxy-alpha-D-galactopyranose + 2-oxoglutarate = dTDP-3-dehydro-6-deoxy-alpha-D-galactose + L-glutamate. In terms of biological role, specifically aminates dTDP-6-deoxy-D-xylohex-3-ulose to form dTDP-D-Fucp3N in the biosynthesis of dTDP-3-acetamido-3,6-dideoxy-alpha-D-galactose, a glycan chain of the S-layer. The polypeptide is dTDP-3-amino-3,6-dideoxy-alpha-D-galactopyranose transaminase (fdtB) (Aneurinibacillus thermoaerophilus).